A 359-amino-acid chain; its full sequence is N-acetylneuraminate-9-phosphate synthase (359 aa).

Residues lysine 61, lysine 74, and lysine 79 each carry the N6-acetyllysine modification. Phosphoserine is present on serine 275. At lysine 290 the chain carries N6-acetyllysine. The AFP-like domain occupies 294–353; the sequence is SVVAKVKIPEGTILTMDMLTVKVGEPKGYPPEDIFNLVGKKVLVTVEEDDTIMEELVDNH.

In terms of tissue distribution, ubiquitous.

It catalyses the reaction aldehydo-N-acetyl-D-mannosamine 6-phosphate + phosphoenolpyruvate + H2O = N-acetylneuraminate 9-phosphate + phosphate. The catalysed reaction is aldehydo-D-mannose 6-phosphate + phosphoenolpyruvate + H2O = 3-deoxy-D-glycero-beta-D-galacto-non-2-ulopyranosonate 9-phosphate + phosphate. Its function is as follows. Catalyzes the condensation of phosphoenolpyruvate (PEP) and N-acetylmannosamine 6-phosphate (ManNAc-6-P) to synthesize N-acetylneuraminate-9-phosphate (Neu5Ac-9-P). Also catalyzes the condensation of PEP and D-mannose 6-phosphate (Man-6-P) to produce 3-deoxy-D-glycero-beta-D-galacto-non-2-ulopyranosonate 9-phosphate (KDN-9-P). Neu5Ac-9-P and KDN-9-P are the phosphorylated forms of sialic acids N-acetylneuraminic acid (Neu5Ac) and deaminoneuraminic acid (KDN), respectively. Required for brain and skeletal development. In Homo sapiens (Human), this protein is N-acetylneuraminate-9-phosphate synthase.